We begin with the raw amino-acid sequence, 532 residues long: Type 2 DNA topoisomerase 6 subunit B (532 aa).

ATP-binding positions include Asn41, Asp75, 96 to 97, 105 to 112, and Lys427; these read SK and GMYGLGVK.

Belongs to the TOP6B family. As to quaternary structure, homodimer. Heterotetramer of two Top6A and two Top6B chains.

It carries out the reaction ATP-dependent breakage, passage and rejoining of double-stranded DNA.. Functionally, relaxes both positive and negative superturns and exhibits a strong decatenase activity. This is Type 2 DNA topoisomerase 6 subunit B from Sulfurisphaera tokodaii (strain DSM 16993 / JCM 10545 / NBRC 100140 / 7) (Sulfolobus tokodaii).